A 782-amino-acid polypeptide reads, in one-letter code: Structure-specific endonuclease subunit SLX4 (782 aa).

Disordered regions lie at residues 63 to 91 (TPKP…MSAM) and 359 to 425 (KEHE…KKSK). The segment covering 73-84 (GLRKTGSRKSKK) has biased composition (basic residues). A compositionally biased stretch (polar residues) spans 374-388 (PAQSLTQSQVPSSID).

Belongs to the SLX4 family. In terms of assembly, forms a heterodimer with SLX1. In terms of processing, phosphorylated in response to DNA damage.

Its subcellular location is the nucleus. Functionally, regulatory subunit of the SLX1-SLX4 structure-specific endonuclease that resolves DNA secondary structures generated during DNA repair and recombination. Has endonuclease activity towards branched DNA substrates, introducing single-strand cuts in duplex DNA close to junctions with ss-DNA. This Scheffersomyces stipitis (strain ATCC 58785 / CBS 6054 / NBRC 10063 / NRRL Y-11545) (Yeast) protein is Structure-specific endonuclease subunit SLX4.